Here is a 555-residue protein sequence, read N- to C-terminus: High-affinity gluconate transporter ght3 (555 aa).

Topologically, residues 1–9 are cytoplasmic; sequence MNRFITSIL. The chain crosses the membrane as a helical span at residues 10 to 30; it reads VVFISMSGWLQGADTGSISGI. Over 31-58 the chain is Extracellular; that stretch reads LGMRDFQSRFADRYNPISNSYSYSAWRQ. A helical membrane pass occupies residues 59-79; that stretch reads ALLTGTINAGCLFGAMLSSPF. The Cytoplasmic portion of the chain corresponds to 80–87; that stretch reads TERIGKKY. Residues 88–108 form a helical membrane-spanning segment; sequence SICFFSGVYIIAELLLVTAVP. The Extracellular portion of the chain corresponds to 109-112; that stretch reads SWIQ. The chain crosses the membrane as a helical span at residues 113–133; that stretch reads VLVGKILAGVGIGALSVLSPG. Residues 134–144 lie on the Cytoplasmic side of the membrane; that stretch reads YQSEVAPPQIR. Residues 145-165 traverse the membrane as a helical segment; sequence GAVVATYQIFSTGAALVAACI. Topologically, residues 166 to 179 are extracellular; it reads NMGTHKLRKTASWR. A helical membrane pass occupies residues 180 to 200; the sequence is TSFGINMLWGILLMVGVLFLP. The Cytoplasmic portion of the chain corresponds to 201 to 266; that stretch reads ESPRYLIYKG…IFGKDIRYRT (66 aa). Residues 267–285 traverse the membrane as a helical segment; sequence CLGFLVMLFRELIGNNYYF. Residues 286 to 301 lie on the Extracellular side of the membrane; that stretch reads YYATQVFKGTGMTDIF. The helical transmembrane segment at 302-322 threads the bilayer; sequence LPAVILGAINFGTTFGALYTI. The Cytoplasmic segment spans residues 323 to 328; sequence DNLGRR. The chain crosses the membrane as a helical span at residues 329–349; it reads NPLIFGAAFQSICFFIYAAVG. Over 350–363 the chain is Extracellular; the sequence is DRKLIYKNGTSDHR. A glycan (N-linked (GlcNAc...) asparagine) is linked at Asn-357. The helical transmembrane segment at 364-384 threads the bilayer; sequence AGSVMIVFSCLFLFSYCCSWG. Residues 385–404 are Cytoplasmic-facing; that stretch reads PMGWVIVGETFPIRYRSKCA. The chain crosses the membrane as a helical span at residues 405 to 425; that stretch reads SVATSGNWLGNFMISFFTPFI. Residues 426-432 are Extracellular-facing; it reads NNAIGFK. Residues 433-453 traverse the membrane as a helical segment; it reads LGYIYACINLFSSFMIFFLAK. Residues 454-555 lie on the Cytoplasmic side of the membrane; it reads ETKGLTLEEV…FSEDSHPTYI (102 aa). Over residues 492–509 the composition is skewed to basic and acidic residues; it reads KEEEKREREKSKGIRGQE. Positions 492–555 are disordered; the sequence is KEEEKREREK…FSEDSHPTYI (64 aa). Positions 510 to 521 are enriched in acidic residues; it reads EEFIENADEDNN. Residues 522-534 show a composition bias toward low complexity; that stretch reads DSSSSSGSVVSAV. A compositionally biased stretch (basic and acidic residues) spans 545-555; it reads RFSEDSHPTYI.

The protein belongs to the major facilitator superfamily. Sugar transporter (TC 2.A.1.1) family.

Its subcellular location is the membrane. High-affinity gluconate transporter. The sequence is that of High-affinity gluconate transporter ght3 (ght3) from Schizosaccharomyces pombe (strain 972 / ATCC 24843) (Fission yeast).